We begin with the raw amino-acid sequence, 59 residues long: UPF0181 protein YoaH (59 aa).

The protein belongs to the UPF0181 family.

The polypeptide is UPF0181 protein YoaH (Shigella flexneri).